The following is a 388-amino-acid chain: 3-oxo-tetronate kinase (388 aa).

Residues Ser-258 and Gly-360 to Thr-363 contribute to the ATP site.

Belongs to the four-carbon acid sugar kinase family.

The catalysed reaction is 3-dehydro-L-erythronate + ATP = 3-dehydro-4-O-phospho-L-erythronate + ADP + H(+). It carries out the reaction 3-dehydro-D-erythronate + ATP = 3-dehydro-4-O-phospho-D-erythronate + ADP + H(+). Catalyzes the ATP-dependent phosphorylation of 3-oxo-tetronate to 3-oxo-tetronate 4-phosphate. In Escherichia coli (strain K12), this protein is 3-oxo-tetronate kinase.